The following is a 1576-amino-acid chain: eIF-2-alpha kinase GCN2 (1576 aa).

The RWD domain maps to Asn-16–Trp-127. The interval Gln-180–Thr-204 is disordered. Protein kinase domains lie at Val-235 to Arg-511 and Phe-556 to Ile-928. ATP contacts are provided by residues Leu-562 to Val-570 and Lys-585. The interval Tyr-673–Lys-714 is disordered. Positions Ser-695 to Ser-706 are enriched in basic and acidic residues. The Proton acceptor role is filled by Asp-772.

Belongs to the protein kinase superfamily. Ser/Thr protein kinase family. GCN2 subfamily. As to quaternary structure, homodimer; homodimerization is important for kinase activation by uncharged tRNAs. Interacts (via N-terminal RWD domain) with gcn1 (via N- and C-terminus); this interaction stimulates gcn2 kinase activity in a gcn20-dependent manner in response to amino acid starvation. Interacts (via N-terminus) with the gcn1-gcn20 complex on translating ribosomes in amino acid-starved cells; gcn1 may bind near the ribosomal A-site and promotes the transfer of uncharged tRNAs from the A-site to the tRNA-binding domain in gcn2 for its subsequent kinase activation, and hence allowing fil1 translational activation and derepression of amino acid biosynthetic genes. Autophosphorylated.

It is found in the cytoplasm. It catalyses the reaction L-seryl-[protein] + ATP = O-phospho-L-seryl-[protein] + ADP + H(+). The catalysed reaction is L-threonyl-[protein] + ATP = O-phospho-L-threonyl-[protein] + ADP + H(+). Its activity is regulated as follows. The integrated stress response (ISR) is activated in response to conditions that promote ribosome collisions: gcn1, which acts as a ribosome collision sensor, activates gcn2. The RQC pathway and the integrated stress response (ISR) antagonize each other: hel2 prevents the activation of gcn2, while gcn2 suppresses RQC activation. Ribosome stalling-induced integrated stress response prefers ribosomes with empty A sites. The kinase activity is stimulated upon binding to uncharged tRNAs. Its function is as follows. Metabolic-stress sensing protein kinase that phosphorylates the alpha subunit of eukaryotic translation initiation factor 2 (eIF-2-alpha/SUI2) on 'Ser-52' in response to low amino acid, carbon, or purine availability. Required for adapatation to nutrient starvation by acting as a key component of the integrated stress response (ISR), by which cells alter their translational and transcriptional output in response to starvation. Converts phosphorylated eIF-2-alpha/SUI2 either to a competitive inhibitor of translation initiation factor eIF-2B, leading to a global protein synthesis repression, and thus to a reduced overall utilization of amino acids, or to a translational initiation activation of specific mRNAs, such as the transcriptional activator GCN4, and hence allowing GCN4-mediated reprogramming of transcription to alleviate nutrient depletion. Binds uncharged tRNAs. The polypeptide is eIF-2-alpha kinase GCN2 (Schizosaccharomyces pombe (strain 972 / ATCC 24843) (Fission yeast)).